A 119-amino-acid chain; its full sequence is Large ribosomal subunit protein bL20 (119 aa).

It belongs to the bacterial ribosomal protein bL20 family.

Functionally, binds directly to 23S ribosomal RNA and is necessary for the in vitro assembly process of the 50S ribosomal subunit. It is not involved in the protein synthesizing functions of that subunit. This is Large ribosomal subunit protein bL20 from Clostridium novyi (strain NT).